Consider the following 550-residue polypeptide: MSKNYAPFIKPYMQYNEHGWGPCELDVVDVPYQPFSKSDRLGKITDWTVTQQDKKFTNKYASSFGNNNQYAYFHEEDDESFRLVDSVGSKVIKPYQRGRGFRPSVHNNPRNVRNQRGRKGNAMGNIMGPGLASITQRYGKGRDGRRNQGRKYRNLPARLRESSVVVQSDWVSVKEIDFPRLLKLSLPNMKEGEDIVTCGALDYYDKAYDRVNLKNERTLMKIDRIVHTATTTDDPIIRRLSKTMGNVFATDDILATIMCCTRSNYSWDVVIEKLGTKIFFDKRDNVKFDMLTVNETSQEPPMDEEGSNNSAHSLSMEATFINHNFSQQVLKMGAEENKFKLAEPNPFEEAGVELASMGYRYKQWDLGNDITLVARCKHNGVTQLPNGDMQFLSIRALNEWDSKAANSIEWRQKLDSQRGAVLSTELRNNACKLAKWTVESVLAGSDQLKLGYVSRVSPRDHLRHVILGTQQFKPQEFATQINLNMDNCWGILRCLIDIIRMQPDGKYLIMKDPNKPMVRIYHIPENAFDSDVSEEEESSEDKPFGLSMNN.

The segment at 97–126 (RGRGFRPSVHNNPRNVRNQRGRKGNAMGNI) is disordered. The tract at residues 287 to 301 (KFDMLTVNETSQEPP) is RNA gate. Residues 530-550 (SDVSEEEESSEDKPFGLSMNN) are disordered.

The protein belongs to the eIF-3 subunit D family. Component of the eukaryotic translation initiation factor 3 (eIF-3) complex. The eIF-3 complex interacts with pix.

It is found in the cytoplasm. In terms of biological role, mRNA cap-binding component of the eukaryotic translation initiation factor 3 (eIF-3) complex, which is involved in protein synthesis of a specialized repertoire of mRNAs and, together with other initiation factors, stimulates binding of mRNA and methionyl-tRNAi to the 40S ribosome. The eIF-3 complex specifically targets and initiates translation of a subset of mRNAs involved in cell proliferation. In the eIF-3 complex, eif3d specifically recognizes and binds the 7-methylguanosine cap of a subset of mRNAs. This is Eukaryotic translation initiation factor 3 subunit D-2 from Drosophila willistoni (Fruit fly).